Here is a 225-residue protein sequence, read N- to C-terminus: UPF0758 protein Shewmr7_0359 (225 aa).

Residues Val-102 to Ile-224 form the MPN domain. The Zn(2+) site is built by His-173, His-175, and Asp-186. The JAMM motif motif lies at His-173–Asp-186.

The protein belongs to the UPF0758 family.

The polypeptide is UPF0758 protein Shewmr7_0359 (Shewanella sp. (strain MR-7)).